The primary structure comprises 398 residues: Putative F-box/kelch-repeat protein At2g29780 (398 aa).

The tract at residues 1–46 (MAIISETSDDGSHGGVPNKKPEELHKNPKEDDHQEEEVENHPPIPR) is disordered. The segment covering 19–32 (KKPEELHKNPKEDD) has biased composition (basic and acidic residues). The F-box domain occupies 43–90 (PIPRQIPQALIRRTVALIKRCHYPSLSLLSKAFRIVISSPELHQTRSS). Kelch repeat units follow at residues 148–195 (KMYV…VING), 196–241 (KIYV…GFVT), 243–289 (VVMQ…VIED), and 295–342 (DPYC…GGKL).

This is Putative F-box/kelch-repeat protein At2g29780 from Arabidopsis thaliana (Mouse-ear cress).